A 301-amino-acid polypeptide reads, in one-letter code: Thioredoxin-related transmembrane protein 2-A (301 aa).

An N-terminal signal peptide occupies residues 1–19 (MSLIRGLISTIYYLPKIYK). At 20–111 (WFYRPYYFLS…VVLFFRVDLR (92 aa)) the chain is on the extracellular side. A helical membrane pass occupies residues 112-132 (FGLLYLTLCVVFLITCKPPAY). The 148-residue stretch at 122 to 269 (VFLITCKPPA…IFQKYKKFSK (148 aa)) folds into the Thioredoxin domain. Topologically, residues 133–301 (MGPENIKYFR…EEDSESKKDK (169 aa)) are cytoplasmic. The disordered stretch occupies residues 268-301 (SKGEKPEEPQPVLEEESESPLEEEEEDSESKKDK). Over residues 280–295 (LEEESESPLEEEEEDS) the composition is skewed to acidic residues. A Di-lysine motif motif is present at residues 298–301 (KKDK).

In terms of assembly, monomer. Homodimer; disulfide-linked. Occurs in both reduced and oxidized monomeric form. Oxidative conditions increase homodimerization.

The protein localises to the endoplasmic reticulum membrane. It localises to the mitochondrion membrane. Endoplasmic reticulum and mitochondria-associated protein that probably functions as a regulator of cellular redox state and thereby regulates protein post-translational modification, protein folding and mitochondrial activity. In Danio rerio (Zebrafish), this protein is Thioredoxin-related transmembrane protein 2-A.